The chain runs to 67 residues: DNA-directed RNA polymerase subunit omega (67 aa).

Belongs to the RNA polymerase subunit omega family. As to quaternary structure, the RNAP catalytic core consists of 2 alpha, 1 beta, 1 beta' and 1 omega subunit. When a sigma factor is associated with the core the holoenzyme is formed, which can initiate transcription.

It catalyses the reaction RNA(n) + a ribonucleoside 5'-triphosphate = RNA(n+1) + diphosphate. Functionally, promotes RNA polymerase assembly. Latches the N- and C-terminal regions of the beta' subunit thereby facilitating its interaction with the beta and alpha subunits. This chain is DNA-directed RNA polymerase subunit omega, found in Albidiferax ferrireducens (strain ATCC BAA-621 / DSM 15236 / T118) (Rhodoferax ferrireducens).